We begin with the raw amino-acid sequence, 208 residues long: Large ribosomal subunit protein uL3 (208 aa).

Residues 116-146 (GFQGAIKRHGQSRGPMAHGSRYHRRPGSMGP) are disordered.

The protein belongs to the universal ribosomal protein uL3 family. In terms of assembly, part of the 50S ribosomal subunit. Forms a cluster with proteins L14 and L19.

One of the primary rRNA binding proteins, it binds directly near the 3'-end of the 23S rRNA, where it nucleates assembly of the 50S subunit. This Streptococcus mutans serotype c (strain ATCC 700610 / UA159) protein is Large ribosomal subunit protein uL3.